The chain runs to 185 residues: Photosystem I assembly protein Ycf4 (185 aa).

The next 2 membrane-spanning stretches (helical) occupy residues 21 to 43 and 63 to 85; these read NFCWAFLLFLGSLGFVLVGTSSY and GLVMSFYGIAGLFISCYLWCTIL.

This sequence belongs to the Ycf4 family.

Its subcellular location is the plastid. It localises to the chloroplast thylakoid membrane. In terms of biological role, seems to be required for the assembly of the photosystem I complex. This chain is Photosystem I assembly protein Ycf4, found in Brassica oleracea (Wild cabbage).